The following is a 417-amino-acid chain: Serine hydroxymethyltransferase 1 (417 aa).

(6S)-5,6,7,8-tetrahydrofolate-binding positions include Leu121 and 125 to 127 (GHL). Residue Lys229 is modified to N6-(pyridoxal phosphate)lysine. 354–356 (SPF) lines the (6S)-5,6,7,8-tetrahydrofolate pocket.

Belongs to the SHMT family. As to quaternary structure, homodimer. It depends on pyridoxal 5'-phosphate as a cofactor.

Its subcellular location is the cytoplasm. The catalysed reaction is (6R)-5,10-methylene-5,6,7,8-tetrahydrofolate + glycine + H2O = (6S)-5,6,7,8-tetrahydrofolate + L-serine. It functions in the pathway one-carbon metabolism; tetrahydrofolate interconversion. Its pathway is amino-acid biosynthesis; glycine biosynthesis; glycine from L-serine: step 1/1. In terms of biological role, catalyzes the reversible interconversion of serine and glycine with tetrahydrofolate (THF) serving as the one-carbon carrier. This reaction serves as the major source of one-carbon groups required for the biosynthesis of purines, thymidylate, methionine, and other important biomolecules. Also exhibits THF-independent aldolase activity toward beta-hydroxyamino acids, producing glycine and aldehydes, via a retro-aldol mechanism. The protein is Serine hydroxymethyltransferase 1 of Pseudomonas savastanoi pv. phaseolicola (strain 1448A / Race 6) (Pseudomonas syringae pv. phaseolicola (strain 1448A / Race 6)).